Here is a 576-residue protein sequence, read N- to C-terminus: Proline--tRNA ligase (576 aa).

It belongs to the class-II aminoacyl-tRNA synthetase family. ProS type 1 subfamily. In terms of assembly, homodimer.

It localises to the cytoplasm. The enzyme catalyses tRNA(Pro) + L-proline + ATP = L-prolyl-tRNA(Pro) + AMP + diphosphate. Its function is as follows. Catalyzes the attachment of proline to tRNA(Pro) in a two-step reaction: proline is first activated by ATP to form Pro-AMP and then transferred to the acceptor end of tRNA(Pro). As ProRS can inadvertently accommodate and process non-cognate amino acids such as alanine and cysteine, to avoid such errors it has two additional distinct editing activities against alanine. One activity is designated as 'pretransfer' editing and involves the tRNA(Pro)-independent hydrolysis of activated Ala-AMP. The other activity is designated 'posttransfer' editing and involves deacylation of mischarged Ala-tRNA(Pro). The misacylated Cys-tRNA(Pro) is not edited by ProRS. The sequence is that of Proline--tRNA ligase from Bordetella pertussis (strain Tohama I / ATCC BAA-589 / NCTC 13251).